The primary structure comprises 273 residues: Dermonecrotic toxin LhSicTox-alphaIA2aviii (273 aa).

His-5 is an active-site residue. Residues Glu-25 and Asp-27 each coordinate Mg(2+). Residue His-41 is the Nucleophile of the active site. Intrachain disulfides connect Cys-45–Cys-51 and Cys-47–Cys-190. Asp-85 lines the Mg(2+) pocket.

The protein belongs to the arthropod phospholipase D family. Class II subfamily. Mg(2+) serves as cofactor. In terms of tissue distribution, expressed by the venom gland.

It is found in the secreted. It catalyses the reaction an N-(acyl)-sphingosylphosphocholine = an N-(acyl)-sphingosyl-1,3-cyclic phosphate + choline. The catalysed reaction is an N-(acyl)-sphingosylphosphoethanolamine = an N-(acyl)-sphingosyl-1,3-cyclic phosphate + ethanolamine. The enzyme catalyses a 1-acyl-sn-glycero-3-phosphocholine = a 1-acyl-sn-glycero-2,3-cyclic phosphate + choline. It carries out the reaction a 1-acyl-sn-glycero-3-phosphoethanolamine = a 1-acyl-sn-glycero-2,3-cyclic phosphate + ethanolamine. Its function is as follows. Dermonecrotic toxins cleave the phosphodiester linkage between the phosphate and headgroup of certain phospholipids (sphingolipid and lysolipid substrates), forming an alcohol (often choline) and a cyclic phosphate. This toxin acts on sphingomyelin (SM). It may also act on ceramide phosphoethanolamine (CPE), lysophosphatidylcholine (LPC) and lysophosphatidylethanolamine (LPE), but not on lysophosphatidylserine (LPS), and lysophosphatidylglycerol (LPG). It acts by transphosphatidylation, releasing exclusively cyclic phosphate products as second products. Induces dermonecrosis, hemolysis, increased vascular permeability, edema, inflammatory response, and platelet aggregation. The protein is Dermonecrotic toxin LhSicTox-alphaIA2aviii of Loxosceles hirsuta (Recluse spider).